The chain runs to 715 residues: Elongation factor G (715 aa).

One can recognise a tr-type G domain in the interval 8–290; that stretch reads NRYRNIGICA…AVIDFLPAPT (283 aa). GTP contacts are provided by residues 17 to 24, 88 to 92, and 142 to 145; these read AHVDAGKT, DTPGH, and NKMD.

This sequence belongs to the TRAFAC class translation factor GTPase superfamily. Classic translation factor GTPase family. EF-G/EF-2 subfamily.

It is found in the cytoplasm. In terms of biological role, catalyzes the GTP-dependent ribosomal translocation step during translation elongation. During this step, the ribosome changes from the pre-translocational (PRE) to the post-translocational (POST) state as the newly formed A-site-bound peptidyl-tRNA and P-site-bound deacylated tRNA move to the P and E sites, respectively. Catalyzes the coordinated movement of the two tRNA molecules, the mRNA and conformational changes in the ribosome. The protein is Elongation factor G of Ectopseudomonas mendocina (strain ymp) (Pseudomonas mendocina).